A 504-amino-acid chain; its full sequence is Amphoterin-induced protein 3 (504 aa).

The signal sequence occupies residues 1 to 19 (MTWLVLLGTLLCMLRVGLG). Topologically, residues 20–383 (TPDSEGFPPR…PRPEPEAFNT (364 aa)) are extracellular. Residues 25 to 61 (GFPPRALHNCPYKCICAADLLSCTGLGLQDVPAELPA) form the LRRNT domain. 2 cysteine pairs are disulfide-bonded: cysteine 34–cysteine 40 and cysteine 38–cysteine 47. 6 LRR repeats span residues 62 to 83 (ATADLDLSHNALQRLRPGWLAP), 86 to 107 (QLRALHLDHNELDALGRGVFVN), 110 to 133 (GLRLLDLSSNTLRALGRHDLDGLG), 134 to 155 (ALEKLLLFNNRLVHLDEHAFHG), 158 to 178 (ALSHLYLGCNELASFSFDHLH), and 184 to 207 (HLLTLDLSSNRLGHISVPELAALP). Residue asparagine 107 is glycosylated (N-linked (GlcNAc...) asparagine). Residues 219-275 (NPLPCDCRLYHLLQRWHQRGLSAVRDFAREYVCLAFKVPASRVRFFQHSRVFENCSS) enclose the LRRCT domain. 3 cysteine pairs are disulfide-bonded: cysteine 223-cysteine 251, cysteine 225-cysteine 273, and cysteine 300-cysteine 352. Residues asparagine 272, asparagine 301, asparagine 362, and asparagine 368 are each glycosylated (N-linked (GlcNAc...) asparagine). Positions 277–370 (PALGLERPEE…HNQTHEYNVS (94 aa)) constitute an Ig-like C2-type domain. The chain crosses the membrane as a helical span at residues 384–404 (GFTTLLGCAVGLVLVLLYLFA). The Cytoplasmic portion of the chain corresponds to 405 to 504 (PPCRCCRRAC…SIGSEGPMTT (100 aa)). Residues 422–448 (TPSPLQELSAQSSVLSTTPPDAPSRKA) are disordered. Residues 424–440 (SPLQELSAQSSVLSTTP) are compositionally biased toward polar residues.

Belongs to the immunoglobulin superfamily. AMIGO family. In terms of assembly, binds AMIGO1 or AMIGO2.

It is found in the membrane. Functionally, may mediate heterophilic cell-cell interaction. May contribute to signal transduction through its intracellular domain. This is Amphoterin-induced protein 3 from Homo sapiens (Human).